Reading from the N-terminus, the 640-residue chain is Probable threonine--tRNA ligase, cytoplasmic (640 aa).

Positions 1-63 (MYEVKLKVEL…LKDCKLELMT (63 aa)) constitute a TGS domain.

The protein belongs to the class-II aminoacyl-tRNA synthetase family.

It localises to the cytoplasm. It catalyses the reaction tRNA(Thr) + L-threonine + ATP = L-threonyl-tRNA(Thr) + AMP + diphosphate + H(+). The protein is Probable threonine--tRNA ligase, cytoplasmic of Encephalitozoon cuniculi (strain GB-M1) (Microsporidian parasite).